An 87-amino-acid polypeptide reads, in one-letter code: UPF0250 protein Spro_1197 (87 aa).

This sequence belongs to the UPF0250 family.

This is UPF0250 protein Spro_1197 from Serratia proteamaculans (strain 568).